The chain runs to 385 residues: G2/mitotic-specific cyclin-B3 (385 aa).

Residues 1–16 (MMLRSQAKNVDLTSQA) are compositionally biased toward polar residues. Disordered regions lie at residues 1–48 (MMLR…HSKG) and 63–88 (SAKR…QKSR). Composition is skewed to basic and acidic residues over residues 17-28 (DSRHQQKRKQAE) and 63-80 (SAKR…RDVE).

This sequence belongs to the cyclin family. Cyclin AB subfamily.

Its subcellular location is the nucleus. Functionally, could be involved at the G2/M (mitosis) transition. Interacts with the CDK1 and CDK2 protein kinases. G2/M cyclins accumulate steadily during G2 and are abruptly destroyed at mitosis. Plays a role during oocyte meiosis II. This Caenorhabditis elegans protein is G2/mitotic-specific cyclin-B3 (cyb-3).